Reading from the N-terminus, the 265-residue chain is tRNA (guanine-N(7)-)-methyltransferase (265 aa).

S-adenosyl-L-methionine-binding residues include E96, E121, D148, and D170. D170 is a catalytic residue. Substrate-binding residues include K174 and D206.

It belongs to the class I-like SAM-binding methyltransferase superfamily. TrmB family.

It catalyses the reaction guanosine(46) in tRNA + S-adenosyl-L-methionine = N(7)-methylguanosine(46) in tRNA + S-adenosyl-L-homocysteine. It participates in tRNA modification; N(7)-methylguanine-tRNA biosynthesis. Catalyzes the formation of N(7)-methylguanine at position 46 (m7G46) in tRNA. This is tRNA (guanine-N(7)-)-methyltransferase from Rhodopseudomonas palustris (strain ATCC BAA-98 / CGA009).